We begin with the raw amino-acid sequence, 326 residues long: Endo-beta-1,4-glucanase A (326 aa).

A signal peptide spans 1–19 (MRSLVLLSSVLALVAPSKG). The active-site Proton donor is the Glu150. Catalysis depends on Glu257, which acts as the Nucleophile.

Belongs to the glycosyl hydrolase 5 (cellulase A) family.

Its subcellular location is the secreted. It catalyses the reaction Endohydrolysis of (1-&gt;4)-beta-D-glucosidic linkages in cellulose, lichenin and cereal beta-D-glucans.. Its function is as follows. Has endoglucanase activity on substrates containing beta-1,4 glycosidic bonds, like in carboxymethylcellulose (CMC), hydroxyethylcellulose (HEC) and beta-glucan. Involved in the degradation of complex natural cellulosic substrates. The protein is Endo-beta-1,4-glucanase A (eglA) of Emericella nidulans (strain FGSC A4 / ATCC 38163 / CBS 112.46 / NRRL 194 / M139) (Aspergillus nidulans).